The sequence spans 443 residues: UDP-N-acetylmuramate--L-alanine ligase (443 aa).

ATP is bound at residue 110 to 116 (GAHGKTS).

Belongs to the MurCDEF family.

It is found in the cytoplasm. It carries out the reaction UDP-N-acetyl-alpha-D-muramate + L-alanine + ATP = UDP-N-acetyl-alpha-D-muramoyl-L-alanine + ADP + phosphate + H(+). Its pathway is cell wall biogenesis; peptidoglycan biosynthesis. Its function is as follows. Cell wall formation. The protein is UDP-N-acetylmuramate--L-alanine ligase of Streptococcus agalactiae serotype V (strain ATCC BAA-611 / 2603 V/R).